Reading from the N-terminus, the 876-residue chain is DNA polymerase 1 (876 aa).

The protein belongs to the DNA polymerase type-B family.

It carries out the reaction DNA(n) + a 2'-deoxyribonucleoside 5'-triphosphate = DNA(n+1) + diphosphate. In terms of biological role, this polymerase possesses two enzymatic activities: DNA synthesis (polymerase) and an exonucleolytic activity that degrades single-stranded DNA in the 3'- to 5'-direction. This Sulfolobus acidocaldarius (strain ATCC 33909 / DSM 639 / JCM 8929 / NBRC 15157 / NCIMB 11770) protein is DNA polymerase 1 (dpo1).